Reading from the N-terminus, the 158-residue chain is Small ribosomal subunit protein eS10 (158 aa).

The interval E99 to P158 is disordered. Positions G149–P158 are enriched in gly residues.

This sequence belongs to the eukaryotic ribosomal protein eS10 family.

It localises to the cytoplasm. The protein is Small ribosomal subunit protein eS10 (RpS10) of Spodoptera frugiperda (Fall armyworm).